The following is a 1330-amino-acid chain: Kinectin (1330 aa).

At 1–6 the chain is on the cytoplasmic side; it reads MEFYES. Residues 7–29 traverse the membrane as a helical; Signal-anchor for type II membrane protein segment; that stretch reads TYFIVLIPSVVITVIFLFFWLFM. Residues 30-1330 are Lumenal-facing; that stretch reads KETLYDEVLA…KEKEHYQVLE (1301 aa). Disordered stretches follow at residues 49 to 81 and 108 to 218; these read PTKT…ESVP and SSSV…KQKA. Residues serine 75 and serine 77 each carry the phosphoserine modification. Over residues 113–122 the composition is skewed to basic residues; that stretch reads ERKKKEKKHK. Residues 123 to 135 show a composition bias toward basic and acidic residues; it reads PVLEEQVTKESDV. A Phosphothreonine modification is found at threonine 153. Serine 156 bears the Phosphoserine mark. The span at 161–171 shows a compositional bias: basic residues; it reads SKKKPGQKKSK. Asparagine 172, asparagine 435, asparagine 772, asparagine 904, and asparagine 1055 each carry an N-linked (GlcNAc...) asparagine glycan. The segment covering 172-182 has biased composition (basic and acidic residues); it reads NGSDDQDKKVE. Residues 332–1329 adopt a coiled-coil conformation; the sequence is HQLQEKDKLL…TKEKEHYQVL (998 aa). Residue serine 1085 is modified to Phosphoserine. Residue asparagine 1236 is glycosylated (N-linked (GlcNAc...) asparagine). Serine 1286 is modified (phosphoserine). Asparagine 1302 carries N-linked (GlcNAc...) asparagine glycosylation.

It belongs to the kinectin family. As to quaternary structure, parallel homodimers formed between the membrane-bound and the cytosolic form, and also between 2 cytosolic forms. Expressed in male brain, heart, kidney, liver, lung, spleen and testis.

Its subcellular location is the endoplasmic reticulum membrane. Functionally, receptor for kinesin thus involved in kinesin-driven vesicle motility. The sequence is that of Kinectin (KTN1) from Vulpes vulpes (Red fox).